The following is a 302-amino-acid chain: HTH-type transcriptional regulator AbgR (302 aa).

The 58-residue stretch at 5 to 62 (VKIHQIRAFVEVARQGSIRGASRMLNMSQPALSKSIQELEEGLAAQLFFRRSKGVTLT) folds into the HTH lysR-type domain. Residues 22 to 41 (IRGASRMLNMSQPALSKSIQ) constitute a DNA-binding region (H-T-H motif).

This sequence belongs to the LysR transcriptional regulatory family.

Functionally, could be the regulator of the abg operon. This chain is HTH-type transcriptional regulator AbgR (abgR), found in Escherichia coli (strain K12).